The following is a 140-amino-acid chain: Gonadotropin subunit beta-2 (140 aa).

The signal sequence occupies residues 1-23 (MSVPASSFLLLCFLMNSFSPAQS). 6 disulfide bridges follow: Cys29/Cys77, Cys43/Cys92, Cys46/Cys130, Cys54/Cys108, Cys58/Cys110, and Cys113/Cys120. Asn33 carries N-linked (GlcNAc...) asparagine glycosylation.

It belongs to the glycoprotein hormones subunit beta family. In terms of assembly, heterodimer of an alpha and a beta chain.

It localises to the secreted. Involved in gametogenesis and steroidogenesis. This is Gonadotropin subunit beta-2 (cgbb) from Ictalurus punctatus (Channel catfish).